Consider the following 653-residue polypeptide: MGRQAWISSLCPLPRPCPFLLLLLLLVVPRGAQPQAGRNHTEPPGPNVTATPVTPTIPVISGNVSTSTESAPAAETEGPQSERYPPPSSSSPPGGQVLTESGQPCRFPFRYGGRMLHSCTSEGSAYRKWCATTHNYDRDRAWGYCAEVTLPVEGPAILDPCASGPCLNGGTCSSTHDHGSYHCSCPLAFTGKDCGTEKCFDETRYEYFEVGDHWARVSEGHVEQCGCMEGQARCEDTHHTACLSSPCLNGGTCHLIVGTGTSVCTCPLGYAGRFCNIVPTEHCFLGNGTEYRGVASTAASGLSCLAWNSDLLYQELHVDSVAAAVLLGLGPHAYCRNPDKDERPWCYVVKDNALSWEYCRLTACESLARVHSQTPEILAALPESAPAVRPTCGKRHKKRTFLRPRIIGGSSSLPGSHPWLAAIYIGNSFCAGSLVHTCWVVSAAHCFANSPPRDSITVVLGQHFFNRTTDVTQTFGIEKYVPYTLYSVFNPNNHDLVLIRLKKKGERCAVRSQFVQPICLPEAGSSFPTGHKCQIAGWGHMDENVSSYSNSLLEALVPLVADHKCSSPEVYGADISPNMLCAGYFDCKSDACQGDSGGPLVCEKNGVAYLYGIISWGDGCGRLNKPGVYTRVANYVDWINDRIRPPKRPVATS.

Positions 1–34 (MGRQAWISSLCPLPRPCPFLLLLLLLVVPRGAQP) are cleaved as a signal peptide. The tract at residues 34-98 (PQAGRNHTEP…SSSPPGGQVL (65 aa)) is disordered. A propeptide spans 35-369 (QAGRNHTEPP…RLTACESLAR (335 aa)) (removed in mature form). N-linked (GlcNAc...) asparagine glycosylation is found at N39, N47, and N63. Residues 47–59 (NVTATPVTPTIPV) show a composition bias toward low complexity. The 48-residue stretch at 100 to 147 (ESGQPCRFPFRYGGRMLHSCTSEGSAYRKWCATTHNYDRDRAWGYCAE) folds into the Fibronectin type-II domain. 19 cysteine pairs are disulfide-bonded: C105–C130, C119–C145, C161–C172, C166–C183, C185–C194, C199–C227, C225–C234, C242–C253, C247–C264, C266–C275, C283–C364, C304–C346, C335–C359, C392–C519, C430–C446, C438–C508, C533–C602, C565–C581, and C592–C620. In terms of domain architecture, EGF-like 1 spans 157-195 (ILDPCASGPCLNGGTCSSTHDHGSYHCSCPLAFTGKDCG). The region spanning 197 to 237 (EKCFDETRYEYFEVGDHWARVSEGHVEQCGCMEGQARCEDT) is the Fibronectin type-I domain. Residues 238-276 (HHTACLSSPCLNGGTCHLIVGTGTSVCTCPLGYAGRFCN) form the EGF-like 2 domain. Positions 283–364 (CFLGNGTEYR…SWEYCRLTAC (82 aa)) constitute a Kringle domain. The N-linked (GlcNAc...) asparagine glycan is linked to N287. In terms of domain architecture, Peptidase S1 spans 406–644 (IIGGSSSLPG…YVDWINDRIR (239 aa)). H445 acts as the Charge relay system in catalysis. The N-linked (GlcNAc...) asparagine glycan is linked to N466. Residue D495 is the Charge relay system of the active site. An N-linked (GlcNAc...) asparagine glycan is attached at N544. Catalysis depends on S596, which acts as the Charge relay system.

This sequence belongs to the peptidase S1 family. Heterodimer of a short chain and a long chain linked by a disulfide bond. In terms of processing, the active form of HGFAC presents in the serum is derived from the COOH-terminal region of the precursor by the cleavage of bonds between Arg-369 and Val-370 and Arg-405 and Ile-406.

It is found in the secreted. In terms of biological role, serine protease that hydrolyzes the inactive zymogen hepatocyte growth factor (HGFsc) to an activated disulfide-linked heterodimer, then initiating hepatocyte growth factor receptor signaling pathway. The chain is Hepatocyte growth factor activator serine protease from Mus musculus (Mouse).